Reading from the N-terminus, the 504-residue chain is Fibroblast growth factor receptor-like 1 (504 aa).

The first 24 residues, 1-24, serve as a signal peptide directing secretion; sequence MTPSPLLLLLLPPLLLGAFPPAAA. The Extracellular portion of the chain corresponds to 25–378; that stretch reads ARGPPKMADK…SSSATSLPWP (354 aa). In terms of domain architecture, Ig-like C2-type 1 spans 29–115; it reads PKMADKVVPR…GSLSVNYTLV (87 aa). An intrachain disulfide couples C51 to C99. N111 is a glycosylation site (N-linked (GlcNAc...) asparagine). The interval 123 to 155 is disordered; sequence GKESLGPDSSSGGQEDPASQQWARPRFTQPSKM. Polar residues predominate over residues 129–144; the sequence is PDSSSGGQEDPASQQW. Ig-like C2-type domains are found at residues 147–237 and 246–354; these read PRFT…YKVD and PVLT…AFLT. A disulfide bridge connects residues C172 and C221. 3 N-linked (GlcNAc...) asparagine glycosylation sites follow: N231, N255, and N293. Residues C268 and C338 are joined by a disulfide bond. Residues 379–399 form a helical membrane-spanning segment; the sequence is VVIGIPAGAVFILGTLLLWLC. Over 400–504 the chain is Cytoplasmic; sequence QAQKKPCTPA…KVHQHIHYQC (105 aa). A compositionally biased stretch (pro residues) spans 407 to 418; that stretch reads TPAPAPPLPGHR. Positions 407-435 are disordered; sequence TPAPAPPLPGHRPPGTARDRSGDKDLPSL. Residues 423-432 are compositionally biased toward basic and acidic residues; it reads ARDRSGDKDL.

In terms of assembly, interacts with FGF2 with a low affinity. As to expression, expressed preferentially in cartilaginous tissues and pancreas. Highly expressed in the liver, kidney, heart, brain and skeletal muscle. Weakly expressed in the lung, small intestine and spleen.

The protein localises to the membrane. Its function is as follows. Has a negative effect on cell proliferation. The chain is Fibroblast growth factor receptor-like 1 (FGFRL1) from Homo sapiens (Human).